We begin with the raw amino-acid sequence, 538 residues long: Bifunctional purine biosynthesis protein PurH (538 aa).

An MGS-like domain is found at 8-158 (IPAPDKVEIK…KNHAYVTILT (151 aa)).

The protein belongs to the PurH family.

It catalyses the reaction (6R)-10-formyltetrahydrofolate + 5-amino-1-(5-phospho-beta-D-ribosyl)imidazole-4-carboxamide = 5-formamido-1-(5-phospho-D-ribosyl)imidazole-4-carboxamide + (6S)-5,6,7,8-tetrahydrofolate. The catalysed reaction is IMP + H2O = 5-formamido-1-(5-phospho-D-ribosyl)imidazole-4-carboxamide. The protein operates within purine metabolism; IMP biosynthesis via de novo pathway; 5-formamido-1-(5-phospho-D-ribosyl)imidazole-4-carboxamide from 5-amino-1-(5-phospho-D-ribosyl)imidazole-4-carboxamide (10-formyl THF route): step 1/1. Its pathway is purine metabolism; IMP biosynthesis via de novo pathway; IMP from 5-formamido-1-(5-phospho-D-ribosyl)imidazole-4-carboxamide: step 1/1. This chain is Bifunctional purine biosynthesis protein PurH, found in Rhizobium leguminosarum bv. trifolii (strain WSM2304).